A 294-amino-acid chain; its full sequence is Transcription termination/antitermination protein NusG (294 aa).

Residues 1–91 (MSDPNLNDAV…EEAEPAAPVD (91 aa)) form a disordered region. A compositionally biased stretch (acidic residues) spans 25 to 39 (DIVEAADSVDPDQAE). A compositionally biased stretch (low complexity) spans 40 to 53 (AADLAAGEPAERAA). Acidic residues predominate over residues 59-85 (DDSDEDDAAAEEAVEADDESADEEEAE).

Belongs to the NusG family.

In terms of biological role, participates in transcription elongation, termination and antitermination. The polypeptide is Transcription termination/antitermination protein NusG (Streptomyces griseus).